The primary structure comprises 354 residues: Guanine nucleotide-binding protein alpha-3 subunit (354 aa).

Residue Gly2 is the site of N-myristoyl glycine attachment. Residue Cys4 is the site of S-palmitoyl cysteine attachment. Positions 33–354 (KECKILLLGS…TNALKDSGIL (322 aa)) constitute a G-alpha domain. The G1 motif stretch occupies residues 36 to 49 (KILLLGSGESGKST). GTP is bound by residues 41–48 (GSGESGKS), 177–183 (LRARSKT), 202–206 (DVGGQ), 271–274 (NKID), and Ala326. Mg(2+) is bound by residues Ser48 and Thr183. Residues 175-183 (DVLRARSKT) form a G2 motif region. The interval 198–207 (IHLFDVGGQR) is G3 motif. The G4 motif stretch occupies residues 267 to 274 (ILFLNKID). The segment at 324–329 (TQATDT) is G5 motif.

It belongs to the G-alpha family. G proteins are composed of 3 units; alpha, beta and gamma. The alpha chain contains the guanine nucleotide binding site.

Guanine nucleotide-binding proteins (G proteins) are involved as modulators or transducers in various transmembrane signaling systems. GPA3 plays an active role in transmission of the pheromone signal. This chain is Guanine nucleotide-binding protein alpha-3 subunit (GPA3), found in Mycosarcoma maydis (Corn smut fungus).